A 375-amino-acid chain; its full sequence is Succinyl-diaminopimelate desuccinylase (375 aa).

His-66 is a binding site for Zn(2+). Residue Asp-68 is part of the active site. Asp-99 lines the Zn(2+) pocket. The active-site Proton acceptor is the Glu-133. The Zn(2+) site is built by Glu-134, Glu-162, and His-348.

This sequence belongs to the peptidase M20A family. DapE subfamily. Homodimer. Zn(2+) is required as a cofactor. The cofactor is Co(2+).

It catalyses the reaction N-succinyl-(2S,6S)-2,6-diaminopimelate + H2O = (2S,6S)-2,6-diaminopimelate + succinate. Its pathway is amino-acid biosynthesis; L-lysine biosynthesis via DAP pathway; LL-2,6-diaminopimelate from (S)-tetrahydrodipicolinate (succinylase route): step 3/3. Functionally, catalyzes the hydrolysis of N-succinyl-L,L-diaminopimelic acid (SDAP), forming succinate and LL-2,6-diaminopimelate (DAP), an intermediate involved in the bacterial biosynthesis of lysine and meso-diaminopimelic acid, an essential component of bacterial cell walls. The chain is Succinyl-diaminopimelate desuccinylase from Citrobacter koseri (strain ATCC BAA-895 / CDC 4225-83 / SGSC4696).